The sequence spans 537 residues: MKSPTLLSLGYMFLVLLFFQQAWAQFPRECATIEALRNGVCCPDLSPLSGPGSDRCGLSSGRGRCEVVIADSRPHSHHYPHDGRDDREGWPTRSFNRTCHCNGNFSGHNCGTCRPGWGGAACDQRVLTVRRNLLDLSTEEKNRFVRALDMAKRTTHPQFVIATRRSEEILGPDGNTPQFENISIYNYFVWTHYYSVKKTFLGAGQESFGEVDFSHEGPAFLTWHRYHLLQLERDMQEMLQDPSFSLPYWNFATGKNTCDICTDDLMGSRSNFDSTLISPNSVFSQWRVVCESLEDYDTLGTLCNSTEGGPIKRNPAGNVARPMVQRLPKPQDVAQCLEVGSYDTPPFYSNSTNSFRNTVEGYSHPTGRYDPAVRSLHNLAHLFLNGTGGQTHLSPNDPIFVLLHTFTDAVFDEWLRRYNADISTYPLENAPIGHNRQYNMVPFWPPVTNIEMFVTAPDNLGYTYEVQWPSRSFSISEIVTIAVVAALSLVAVIFAGASCLIRARSNMDEANQPLLTDQYQHYIEEYEKIHNPNQSVV.

The N-terminal stretch at 1–24 is a signal peptide; it reads MKSPTLLSLGYMFLVLLFFQQAWA. Topologically, residues 25–477 are lumenal, melanosome; the sequence is QFPRECATIE…WPSRSFSISE (453 aa). Disulfide bonds link C30/C41, C42/C65, C56/C99, C101/C110, and C113/C122. N-linked (GlcNAc...) asparagine glycosylation is found at N96 and N104. N181 is a glycosylation site (N-linked (GlcNAc...) asparagine). Residues H192, H215, and H224 each contribute to the Zn(2+) site. 2 disulfide bridges follow: C258–C261 and C290–C303. N-linked (GlcNAc...) asparagine glycans are attached at residues N304 and N350. Residues H377 and H381 each contribute to the Zn(2+) site. Residue N385 is glycosylated (N-linked (GlcNAc...) asparagine). H404 contacts Zn(2+). The chain crosses the membrane as a helical span at residues 478–501; it reads IVTIAVVAALSLVAVIFAGASCLI. Residues 502-537 are Cytoplasmic-facing; it reads RARSNMDEANQPLLTDQYQHYIEEYEKIHNPNQSVV.

It belongs to the tyrosinase family. Monomer. Interacts with ATP7A. Interacts with SLC45A2. Requires Cu(2+) as cofactor. It depends on Zn(2+) as a cofactor. Post-translationally, glycosylated.

The protein localises to the melanosome membrane. It catalyses the reaction 2 5,6-dihydroxyindole-2-carboxylate + O2 = 2 indole-5,6-quinone-2-carboxylate + 2 H2O. It participates in pigment biosynthesis; melanin biosynthesis. Its function is as follows. Plays a role in melanin biosynthesis. Catalyzes the oxidation of 5,6-dihydroxyindole-2-carboxylic acid (DHICA) into indole-5,6-quinone-2-carboxylic acid. May regulate or influence the type of melanin synthesized. Also to a lower extent, capable of hydroxylating tyrosine and producing melanin. The protein is 5,6-dihydroxyindole-2-carboxylic acid oxidase (TYRP1) of Bos taurus (Bovine).